The following is a 363-amino-acid chain: MEIQNTKSTQILYTDISTKQTQSSSETQKSQNYQQIAAHIPLNVGKNPVLTTTLNDDQLLKLSEQVQHDSEIIARLTDKKMKDLSEMSHTLTPENTLDISSLSSNAVSLIISVAVLLSALRTAETKLGSQLSLIAFDATKSAAENIVRQGLAALSSSITGAVTQVGITGIGAKKTHSGISDQKGALRKNLATAQSLEKELAGSKLGLNKQIDTNITSPQTNSSTKFLGKNKLAPDNISLSTEHKTSLSSPDISLQDKIDTQRRTYELNTLSAQQKQNIGRATMETSAVAGNISTSGGRYASALEEEEQLISQASSKQAEEASQVSKEASQATNQLIQKLLNIIDNINQSRSSTASQIAGNIRA.

The helical transmembrane segment at 99–120 (ISSLSSNAVSLIISVAVLLSAL) threads the bilayer.

This sequence belongs to the SctB/SipC family. The core secretion machinery of the T3SS is composed of approximately 20 different proteins, including cytoplasmic components, a base, an export apparatus and a needle. This subunit is involved in the formation of a pore, called the translocon, in host membrane.

The protein resides in the secreted. The protein localises to the host membrane. Its function is as follows. Component of the type III secretion system (T3SS), also called injectisome, which is used to inject bacterial effector proteins into eukaryotic host cells. IpaB/SctE and IpaC/SctB are inserted into the host membrane where they form a pore and allow the translocation of effector proteins into the cytosol of target cells. This chain is Type 3 secretion system translocon protein SctB, found in Shigella dysenteriae.